The following is a 387-amino-acid chain: ATP phosphoribosyltransferase regulatory subunit (387 aa).

The protein belongs to the class-II aminoacyl-tRNA synthetase family. HisZ subfamily. As to quaternary structure, heteromultimer composed of HisG and HisZ subunits.

The protein localises to the cytoplasm. It participates in amino-acid biosynthesis; L-histidine biosynthesis; L-histidine from 5-phospho-alpha-D-ribose 1-diphosphate: step 1/9. Required for the first step of histidine biosynthesis. May allow the feedback regulation of ATP phosphoribosyltransferase activity by histidine. This is ATP phosphoribosyltransferase regulatory subunit from Psychrobacter arcticus (strain DSM 17307 / VKM B-2377 / 273-4).